The sequence spans 446 residues: Neuraminidase (446 aa).

The tract at residues 13–65 (HFNQYECDSLADNQVMPCEPIIIERNITEIIYLTNTTIEKEICPKLMEYRNWS) is hypervariable stalk region. N-linked (GlcNAc...) asparagine; by host glycosylation is found at Asn38, Asn47, and Asn63. A head of neuraminidase region spans residues 68–446 (QCKITGFAPF…DGANINFMPI (379 aa)). 8 disulfides stabilise this stretch: Cys69–Cys394, Cys101–Cys106, Cys160–Cys207, Cys209–Cys214, Cys255–Cys268, Cys257–Cys266, Cys295–Cys314, and Cys398–Cys424. Arg95 serves as a coordination point for substrate. Asn123 carries an N-linked (GlcNAc...) asparagine; by host glycan. The active-site Proton donor/acceptor is Asp128. Arg129 is a binding site for substrate. Residues Asn177 and Asn211 are each glycosylated (N-linked (GlcNAc...) asparagine; by host). A substrate-binding site is contributed by 253–254 (EE). Arg269 is a binding site for substrate. Residues Asp270, Gly274, and Asp301 each coordinate Ca(2+). The disordered stretch occupies residues 304–327 (RNNDRSSSSDCKNPNNDKGNHGVK). Positions 308-320 (RSSSSDCKNPNND) are enriched in polar residues. Substrate is bound at residue Arg348. N-linked (GlcNAc...) asparagine; by host glycosylation is present at Asn379. The active-site Nucleophile is the Tyr383.

This sequence belongs to the glycosyl hydrolase 34 family. Homotetramer. Ca(2+) is required as a cofactor. Post-translationally, N-glycosylated.

It localises to the virion membrane. Its subcellular location is the host apical cell membrane. The catalysed reaction is Hydrolysis of alpha-(2-&gt;3)-, alpha-(2-&gt;6)-, alpha-(2-&gt;8)- glycosidic linkages of terminal sialic acid residues in oligosaccharides, glycoproteins, glycolipids, colominic acid and synthetic substrates.. With respect to regulation, inhibited by the neuraminidase inhibitors zanamivir (Relenza) and oseltamivir (Tamiflu). These drugs interfere with the release of progeny virus from infected cells and are effective against all influenza strains. Resistance to neuraminidase inhibitors is quite rare. Functionally, catalyzes the removal of terminal sialic acid residues from viral and cellular glycoconjugates. Cleaves off the terminal sialic acids on the glycosylated HA during virus budding to facilitate virus release. Additionally helps virus spread through the circulation by further removing sialic acids from the cell surface. These cleavages prevent self-aggregation and ensure the efficient spread of the progeny virus from cell to cell. Otherwise, infection would be limited to one round of replication. Described as a receptor-destroying enzyme because it cleaves a terminal sialic acid from the cellular receptors. May facilitate viral invasion of the upper airways by cleaving the sialic acid moieties on the mucin of the airway epithelial cells. Likely to plays a role in the budding process through its association with lipid rafts during intracellular transport. May additionally display a raft-association independent effect on budding. Plays a role in the determination of host range restriction on replication and virulence. Sialidase activity in late endosome/lysosome traffic seems to enhance virus replication. The protein is Neuraminidase of Influenza A virus (strain A/Swine/Hong Kong/127/1982 H3N2).